We begin with the raw amino-acid sequence, 143 residues long: MFLGEYEHTIDDKGRLAIPARFRDALSEGVVITRGFDRCLMGFPRGVWEELARQVSSLPIGSEETRQLQRMLFSGAADMSLDRQGRILIPQNLREFAELGDQAVIAGLNRHFEIWSPRRWQNVLSAMDANASLFAQKLAELRF.

SpoVT-AbrB domains lie at 5–47 and 76–119; these read EYEH…PRGV and AADM…SPRR.

The protein belongs to the MraZ family. As to quaternary structure, forms oligomers.

It is found in the cytoplasm. Its subcellular location is the nucleoid. This is Transcriptional regulator MraZ from Roseiflexus castenholzii (strain DSM 13941 / HLO8).